The sequence spans 685 residues: DNA-directed RNA polymerase subunit beta' (685 aa).

Residues cysteine 69, cysteine 71, cysteine 87, and cysteine 90 each contribute to the Zn(2+) site. Positions 489, 491, and 493 each coordinate Mg(2+).

This sequence belongs to the RNA polymerase beta' chain family. RpoC1 subfamily. As to quaternary structure, in plastids the minimal PEP RNA polymerase catalytic core is composed of four subunits: alpha, beta, beta', and beta''. When a (nuclear-encoded) sigma factor is associated with the core the holoenzyme is formed, which can initiate transcription. Requires Mg(2+) as cofactor. Zn(2+) is required as a cofactor.

It localises to the plastid. The protein localises to the chloroplast. The catalysed reaction is RNA(n) + a ribonucleoside 5'-triphosphate = RNA(n+1) + diphosphate. DNA-dependent RNA polymerase catalyzes the transcription of DNA into RNA using the four ribonucleoside triphosphates as substrates. In Buxus microphylla (Littleleaf boxwood), this protein is DNA-directed RNA polymerase subunit beta'.